The primary structure comprises 273 residues: Homeobox protein Nkx-2.2 (273 aa).

2 disordered regions span residues 1–56 (MSLT…LDAV) and 91–131 (AASA…KRKR). Acidic residues predominate over residues 20 to 38 (DTNDEEGSVAEGPEEESEG). Residues 128–187 (KRKRRVLFSKAQTYELERRFRQQRYLSAPEREHLASLIRLTPTQVKIWFQNHRYKMKRAR) constitute a DNA-binding region (homeobox).

This sequence belongs to the NK-2 homeobox family. As to quaternary structure, interacts with OLIG2.

The protein resides in the nucleus. Transcriptional activator involved in the development of insulin-producting beta cells in the endocrine pancreas. May also be involved in specifying diencephalic neuromeric boundaries, and in controlling the expression of genes that play a role in axonal guidance. Binds to elements within the NEUROD1 promoter. The chain is Homeobox protein Nkx-2.2 (NKX2-2) from Mesocricetus auratus (Golden hamster).